Reading from the N-terminus, the 367-residue chain is GMP synthase [glutamine-hydrolyzing] subunit B (367 aa).

The GMPS ATP-PPase domain occupies 2 to 190 (FDPASFVEEI…LKLPKEISER (189 aa)). ATP is bound at residue 29–35 (SGGVDST).

Heterodimer composed of a glutamine amidotransferase subunit (A) and a GMP-binding subunit (B).

The catalysed reaction is XMP + L-glutamine + ATP + H2O = GMP + L-glutamate + AMP + diphosphate + 2 H(+). It participates in purine metabolism; GMP biosynthesis; GMP from XMP (L-Gln route): step 1/1. Functionally, catalyzes the synthesis of GMP from XMP. The polypeptide is GMP synthase [glutamine-hydrolyzing] subunit B (guaAB) (Saccharolobus solfataricus (strain ATCC 35092 / DSM 1617 / JCM 11322 / P2) (Sulfolobus solfataricus)).